The chain runs to 361 residues: Probable dual-specificity RNA methyltransferase RlmN (361 aa).

Glutamate 91 serves as the catalytic Proton acceptor. The region spanning glutamine 97 to arginine 329 is the Radical SAM core domain. A disulfide bridge connects residues cysteine 104 and cysteine 340. Cysteine 111, cysteine 115, and cysteine 118 together coordinate [4Fe-4S] cluster. Residues glycine 163 to glutamate 164, serine 195, serine 218 to histidine 220, and asparagine 296 contribute to the S-adenosyl-L-methionine site. The active-site S-methylcysteine intermediate is the cysteine 340.

It belongs to the radical SAM superfamily. RlmN family. The cofactor is [4Fe-4S] cluster.

It localises to the cytoplasm. It catalyses the reaction adenosine(2503) in 23S rRNA + 2 reduced [2Fe-2S]-[ferredoxin] + 2 S-adenosyl-L-methionine = 2-methyladenosine(2503) in 23S rRNA + 5'-deoxyadenosine + L-methionine + 2 oxidized [2Fe-2S]-[ferredoxin] + S-adenosyl-L-homocysteine. It carries out the reaction adenosine(37) in tRNA + 2 reduced [2Fe-2S]-[ferredoxin] + 2 S-adenosyl-L-methionine = 2-methyladenosine(37) in tRNA + 5'-deoxyadenosine + L-methionine + 2 oxidized [2Fe-2S]-[ferredoxin] + S-adenosyl-L-homocysteine. Specifically methylates position 2 of adenine 2503 in 23S rRNA and position 2 of adenine 37 in tRNAs. This Streptococcus pneumoniae serotype 19F (strain G54) protein is Probable dual-specificity RNA methyltransferase RlmN.